A 306-amino-acid chain; its full sequence is Ankyrin repeat domain-containing protein 23 (306 aa).

Residues Gln-41–Lys-90 adopt a coiled-coil conformation. A disordered region spans residues Leu-78–Pro-107. Over residues Gln-80–Val-91 the composition is skewed to basic residues. ANK repeat units lie at residues Leu-144–Val-173, Leu-177–Ala-206, Ile-210–Ala-239, and Glu-243–Val-272. Residues Arg-179 to Arg-196 are interaction with TTN.

As to quaternary structure, interacts with titin/TTN and MYPN.

It is found in the nucleus. May be involved in the energy metabolism. Could be a molecular link between myofibrillar stretch-induced signaling pathways and muscle gene expression. This chain is Ankyrin repeat domain-containing protein 23 (Ankrd23), found in Mus musculus (Mouse).